The primary structure comprises 246 residues: Complement C1q tumor necrosis factor-related protein 3 (246 aa).

The first 22 residues, 1–22, serve as a signal peptide directing secretion; sequence MLWRQLIYWQLLALFFLPFCLC. Residues 51–113 form the Collagen-like domain; the sequence is GYQGPPGPPG…KGEKGYPGIP (63 aa). The segment at 53-110 is disordered; that stretch reads QGPPGPPGPPGIPGNHGNNGNNGATGHEGAKGEKGDKGDLGPRGERGQHGPKGEKGYP. Over residues 55–64 the composition is skewed to pro residues; sequence PPGPPGPPGI. A compositionally biased stretch (low complexity) spans 65 to 74; that stretch reads PGNHGNNGNN. A glycan (N-linked (GlcNAc...) asparagine) is linked at asparagine 70. Residues 80–107 are compositionally biased toward basic and acidic residues; sequence EGAKGEKGDKGDLGPRGERGQHGPKGEK. The region spanning 113 to 246 is the C1q domain; the sequence is PPELQIAFMA…FAGFLLFETK (134 aa).

In terms of processing, glycosylated on Asn-70. Expressed in colon and small intestine.

It localises to the secreted. The polypeptide is Complement C1q tumor necrosis factor-related protein 3 (C1QTNF3) (Homo sapiens (Human)).